The sequence spans 567 residues: Geraniol synthase, chloroplastic (567 aa).

A chloroplast-targeting transit peptide spans 1-63 (MSCARITVTL…GDNSQRKNTR (63 aa)). The segment at 48-75 (STPLINGDNSQRKNTRQHMEESSSKRRE) is disordered. The span at 64–75 (QHMEESSSKRRE) shows a compositional bias: basic and acidic residues. (2E)-geranyl diphosphate-binding residues include arginine 286, aspartate 323, aspartate 327, arginine 466, and aspartate 469. Mn(2+) is bound by residues aspartate 323 and aspartate 327. Positions 323-327 (DDIFD) match the DDXXD motif motif. The Mn(2+) site is built by aspartate 469, threonine 473, and glutamate 477.

The protein belongs to the terpene synthase family. Tpsb subfamily. As to quaternary structure, homodimer. Mn(2+) serves as cofactor. Expressed in the peltate glandular trichomes of the leaves.

It localises to the plastid. The protein localises to the chloroplast. It catalyses the reaction (2E)-geranyl diphosphate + H2O = (2E)-geraniol + diphosphate. The protein operates within secondary metabolite biosynthesis; terpenoid biosynthesis. In terms of biological role, monoterpene synthase that catalyzes the formation of geraniol from geranyl diphosphate. This Ocimum basilicum (Sweet basil) protein is Geraniol synthase, chloroplastic (GES).